A 665-amino-acid chain; its full sequence is UvrABC system protein B (665 aa).

The Helicase ATP-binding domain maps to 25–178 (ASLQAEHRFQ…RQLLRDLTTI (154 aa)). Residue 38–45 (GATGTGKT) coordinates ATP. A Beta-hairpin motif is present at residues 91-114 (YYDYYQPEAYIPVTDTYIEKTAAI). Residues 429 to 595 (QVDDLLGEVR…PIVKKASNAI (167 aa)) enclose the Helicase C-terminal domain. Residues 626-661 (PELITQLEAQMKEAAKKLEFEEAAKYRDRIKQLRDK) form the UVR domain.

The protein belongs to the UvrB family. Forms a heterotetramer with UvrA during the search for lesions. Interacts with UvrC in an incision complex.

The protein resides in the cytoplasm. The UvrABC repair system catalyzes the recognition and processing of DNA lesions. A damage recognition complex composed of 2 UvrA and 2 UvrB subunits scans DNA for abnormalities. Upon binding of the UvrA(2)B(2) complex to a putative damaged site, the DNA wraps around one UvrB monomer. DNA wrap is dependent on ATP binding by UvrB and probably causes local melting of the DNA helix, facilitating insertion of UvrB beta-hairpin between the DNA strands. Then UvrB probes one DNA strand for the presence of a lesion. If a lesion is found the UvrA subunits dissociate and the UvrB-DNA preincision complex is formed. This complex is subsequently bound by UvrC and the second UvrB is released. If no lesion is found, the DNA wraps around the other UvrB subunit that will check the other stand for damage. The polypeptide is UvrABC system protein B (Cyanothece sp. (strain PCC 7425 / ATCC 29141)).